Consider the following 286-residue polypeptide: N-alpha-acetyltransferase 80 (286 aa).

The segment at 33 to 54 is disordered; the sequence is TFNPGPTELTLDPEHQPEETPA. An N-acetyltransferase domain is found at 60–207; the sequence is LTLEPVHRRP…VFTSRRLPAT (148 aa). Residues Arg85 and 90-93 contribute to the substrate site; that span reads RLHS. Residues 141–143, 149–154, and Gln179 contribute to the acetyl-CoA site; these read VVV and GRGFGR. The disordered stretch occupies residues 212–269; sequence FPTAPSPRPPRKAPNLTAQAAPRGPKGPPLPPPPPLPECLTISPPVPSGPPSKSLLET. The segment covering 236-248 has biased composition (pro residues); that stretch reads PKGPPLPPPPPLP.

This sequence belongs to the acetyltransferase family. As to expression, strongly expressed in heart and skeletal muscle, followed by brain and pancreas, with weak expression in kidney, liver, and lung and no expression in placenta.

Its subcellular location is the cytoplasm. It is found in the cytosol. It carries out the reaction N-terminal L-aspartyl-L-aspartyl-L-aspartyl-[protein] + acetyl-CoA = N-terminal N-acetyl-L-aspartyl-L-aspartyl-L-aspartyl-[protein] + CoA + H(+). It catalyses the reaction N-terminal L-glutamyl-L-glutamyl-L-glutamyl-[protein] + acetyl-CoA = N-terminal N-acetyl-L-glutamyl-L-glutamyl-L-glutamyl-[protein] + CoA + H(+). Its function is as follows. N-alpha-acetyltransferase that specifically mediates the acetylation of the acidic amino terminus of processed forms of beta- and gamma-actin (ACTB and ACTG, respectively). N-terminal acetylation of processed beta- and gamma-actin regulates actin filament depolymerization and elongation. In vivo, preferentially displays N-terminal acetyltransferase activity towards acid N-terminal sequences starting with Asp-Asp-Asp and Glu-Glu-Glu. In vitro, shows high activity towards Met-Asp-Glu-Leu and Met-Asp-Asp-Asp. May act as a tumor suppressor. In Homo sapiens (Human), this protein is N-alpha-acetyltransferase 80.